A 379-amino-acid polypeptide reads, in one-letter code: Acetylajmalan esterase 1 (379 aa).

Residues 1–20 form the signal peptide; sequence MGFAPLLVFSLFVFAGTTKG. Ser34 acts as the Nucleophile in catalysis. Residues Asn96, Asn178, Asn197, and Asn291 are each glycosylated (N-linked (GlcNAc...) asparagine). Active-site residues include Asp332 and His335.

It belongs to the 'GDSL' lipolytic enzyme family. In terms of tissue distribution, expressed in roots and leaves at low levels.

It carries out the reaction 17-O-acetylnorajmaline + H2O = norajmaline + acetate + H(+). The catalysed reaction is 17-O-acetylajmaline + H2O = ajmaline + acetate + H(+). It participates in alkaloid biosynthesis; ajmaline biosynthesis. Acetylesterase involved in the biosynthesis of ajmaline-type monoterpenoid indole alkaloids (MIAs) natural products, important plant-derived pharmaceuticals used in the therapy of heart disorders. Deacetylates 17-O-acetylnorajmaline to produce norajmaline. May also catalyze the conversion of 17-O-acetylajmaline to ajmaline. The chain is Acetylajmalan esterase 1 from Rauvolfia serpentina (Serpentine wood).